The primary structure comprises 255 residues: Altered inheritance of mitochondria protein 36, mitochondrial (255 aa).

The transit peptide at 1–40 directs the protein to the mitochondrion; that stretch reads MLRPLRKSVLASCRHCFKVCGGLPQKQLPLFSPLLLRARY. The chain crosses the membrane as a helical span at residues 64–82; it reads IFLVAIIGTVIFVKTVQSL.

The protein belongs to the AIM36 family.

It localises to the mitochondrion membrane. The polypeptide is Altered inheritance of mitochondria protein 36, mitochondrial (AIM36) (Saccharomyces cerevisiae (strain RM11-1a) (Baker's yeast)).